The following is a 67-amino-acid chain: Ceratotoxin-C (67 aa).

Positions 1–23 (MANIKAVFLICIVAFIAFHCVVA) are cleaved as a signal peptide. Residues 24–35 (EPTAEDSVVVKR) constitute a propeptide that is removed on maturation.

Homomer of four to six subunits.

It is found in the secreted. Its function is as follows. Female-specific peptides with potent activity against Gram-positive and Gram-negative bacteria. They have as well hemolytic activity. In Ceratitis capitata (Mediterranean fruit fly), this protein is Ceratotoxin-C (CTXC1).